Reading from the N-terminus, the 223-residue chain is Noggin (223 aa).

The signal sequence occupies residues 1–26 (MDHSQCLVTIYAAAVLLGLRLQQGSC). The N-linked (GlcNAc...) asparagine glycan is linked to asparagine 61. 4 disulfides stabilise this stretch: cysteine 146/cysteine 183, cysteine 169/cysteine 219, cysteine 175/cysteine 221, and cysteine 198/cysteine 206.

Belongs to the noggin family. As to quaternary structure, homodimer.

Its subcellular location is the secreted. Functionally, inhibitor of bone morphogenetic proteins (BMP) signaling. Controls somitogenesis by sequestering the BMP-4 activity which in turn differentiates distinct subtypes of the mesoderm along the mediolateral axis. This chain is Noggin (NOG), found in Gallus gallus (Chicken).